The chain runs to 450 residues: 23S rRNA (uracil(1939)-C(5))-methyltransferase RlmD (450 aa).

A TRAM domain is found at 12–70 (SKQLSAKLSLNVDQLDHLGAGIAQYQGKVVFIPGALPDETVTVQLTEQKKNYARAKLIK). The [4Fe-4S] cluster site is built by Cys83, Cys89, Cys92, and Cys171. The S-adenosyl-L-methionine site is built by Gln283, Phe312, Asn317, Glu333, Asp360, and Asp380. The Nucleophile role is filled by Cys406.

The protein belongs to the class I-like SAM-binding methyltransferase superfamily. RNA M5U methyltransferase family. RlmD subfamily.

It catalyses the reaction uridine(1939) in 23S rRNA + S-adenosyl-L-methionine = 5-methyluridine(1939) in 23S rRNA + S-adenosyl-L-homocysteine + H(+). Its function is as follows. Catalyzes the formation of 5-methyl-uridine at position 1939 (m5U1939) in 23S rRNA. The protein is 23S rRNA (uracil(1939)-C(5))-methyltransferase RlmD of Shewanella putrefaciens (strain CN-32 / ATCC BAA-453).